The sequence spans 1025 residues: DNA ligase 4 (1025 aa).

The disordered stretch occupies residues 1 to 36; the sequence is MMQPTPAPSSAPGSPQRTQAEPEMETPSYPQPPQNV. ATP contacts are provided by Glu289, Lys291, Leu292, Arg296, Glu349, Phe387, Glu447, Lys452, Lys469, and Lys471. The N6-AMP-lysine intermediate role is filled by Lys291. Position 349 (Glu349) interacts with Mg(2+). Residue Glu447 coordinates Mg(2+). A BRCT 1 domain is found at 667-763; it reads VKTDIFNGMK…EPAPFKKKYF (97 aa). A disordered region spans residues 773 to 904; the sequence is ADEYNEDDGE…TTPDVDGDVK (132 aa). 2 stretches are compositionally biased toward acidic residues: residues 775-785 and 806-816; these read EYNEDDGEEEG and SETEDEDEEQA. Basic and acidic residues predominate over residues 817-838; that stretch reads PEIKEEQDGELHEWLKVDDRKS. The segment covering 845–870 has biased composition (acidic residues); the sequence is DEEDSVTEDDSDNADVADEEEPDLDD. The segment covering 891-904 has biased composition (basic and acidic residues); the sequence is RHRETTPDVDGDVK. The region spanning 915–1025 is the BRCT 2 domain; that stretch reads DPDVIFKHLC…TLLDEEEFAP (111 aa).

Belongs to the ATP-dependent DNA ligase family. Mg(2+) serves as cofactor.

Its subcellular location is the nucleus. The enzyme catalyses ATP + (deoxyribonucleotide)n-3'-hydroxyl + 5'-phospho-(deoxyribonucleotide)m = (deoxyribonucleotide)n+m + AMP + diphosphate.. DNA ligase involved in DNA non-homologous end joining (NHEJ); required for double-strand break (DSB) repair. The sequence is that of DNA ligase 4 (LIG4) from Coprinopsis cinerea (Inky cap fungus).